We begin with the raw amino-acid sequence, 174 residues long: uncharacterized protein (174 aa).

A disordered region spans residues 138–174 (VNLTSKSSGRSDEEGTTRRAPVLKTRADFVSRKDKHR). Positions 162 to 174 (TRADFVSRKDKHR) are enriched in basic and acidic residues.

This is an uncharacterized protein from Bos taurus (Bovine).